We begin with the raw amino-acid sequence, 347 residues long: WAT1-related protein At4g15540 (347 aa).

Transmembrane regions (helical) follow at residues 15 to 35 (VVPF…SILY), 47 to 67 (VFVF…SLIF), 73 to 93 (LPTA…LGLT), 108 to 128 (TLSS…AIFF), 139 to 159 (ATQA…VIVL), 178 to 198 (WIIG…WFIL), 210 to 230 (IAVV…VCLL), 243 to 263 (GFSL…GSVI), 276 to 296 (ISLF…IFLG), and 299 to 319 (LHLG…TVIW). Positions 30–158 (GSSILYKAAT…VSISGALVIV (129 aa)) constitute an EamA 1 domain. In terms of domain architecture, EamA 2 spans 216–317 (YNLCATLISG…VILSFGFYTV (102 aa)).

This sequence belongs to the drug/metabolite transporter (DMT) superfamily. Plant drug/metabolite exporter (P-DME) (TC 2.A.7.4) family.

Its subcellular location is the membrane. This is WAT1-related protein At4g15540 from Arabidopsis thaliana (Mouse-ear cress).